The chain runs to 140 residues: Nucleoside diphosphate kinase (140 aa).

Lys-11, Phe-59, Arg-87, Thr-93, Arg-104, and Asn-114 together coordinate ATP. The active-site Pros-phosphohistidine intermediate is the His-117.

It belongs to the NDK family. As to quaternary structure, homotetramer. The cofactor is Mg(2+).

The protein localises to the cytoplasm. It carries out the reaction a 2'-deoxyribonucleoside 5'-diphosphate + ATP = a 2'-deoxyribonucleoside 5'-triphosphate + ADP. It catalyses the reaction a ribonucleoside 5'-diphosphate + ATP = a ribonucleoside 5'-triphosphate + ADP. Functionally, major role in the synthesis of nucleoside triphosphates other than ATP. The ATP gamma phosphate is transferred to the NDP beta phosphate via a ping-pong mechanism, using a phosphorylated active-site intermediate. This is Nucleoside diphosphate kinase from Rickettsia felis (strain ATCC VR-1525 / URRWXCal2) (Rickettsia azadi).